Here is a 1314-residue protein sequence, read N- to C-terminus: Condensin-2 complex subunit CAP-D3 (1314 aa).

10 HEAT repeats span residues 20-58 (ESDY…SFLR), 98-136 (PIAF…KKRG), 184-222 (KSLV…GVLN), 231-267 (TAAE…SLAK), 269-310 (NPEL…AMEV), 331-360 (RVLA…GLKD), 361-398 (SWGL…FLSG), 417-455 (SEGK…LMGG), 457-493 (FDGS…ICTD), and 494-532 (EIVT…ERIL). Residues 116-150 (DDSAGQGSNSQREKGNKKKRGRGKRNLGYEDGEET) are disordered. A compositionally biased stretch (basic residues) spans 130–140 (GNKKKRGRGKR). A Nuclear localization signal motif is present at residues 789 to 796 (SRRSKRLD). 6 HEAT repeats span residues 821-859 (SADT…KQKA), 878-916 (GKLA…VHYT), 917-954 (AMIE…RDYV), 956-992 (WRGV…VKAP), 1053-1091 (QMAP…SVLQ), and 1138-1179 (KGLI…DYKN). Disordered regions lie at residues 1210 to 1237 (MANQ…ENVR) and 1265 to 1314 (VNGG…DDES).

As to quaternary structure, component of the condensin-2 complex. In terms of tissue distribution, present in buds.

It is found in the nucleus. The protein resides in the chromosome. Regulatory subunit of the condensin-2 complex, a complex which establishes mitotic chromosome architecture and is involved in physical rigidity of the chromatid axis. May promote the resolution of double-strand DNA catenanes (intertwines) between sister chromatids. Required for plant vigor, fertility, chromatin condensation and sister chromatid cohesion both during mitosis and meiosis. Necessary to maintain normal structural integrity of the meiotic chromosomes during the two nuclear divisions of gametogenesis, especially to prevent interchromosome connections at metaphase I. Seems also involved in crossover formation during meiotic prophase I. Prevents centromeric and pericentromeric heterochromatin repeats association. This Arabidopsis thaliana (Mouse-ear cress) protein is Condensin-2 complex subunit CAP-D3.